The primary structure comprises 251 residues: Probable transcriptional regulatory protein jk1057 (251 aa).

Positions 1 to 22 (MAGHSKWATTKHKKAANDAKRG) are disordered.

Belongs to the TACO1 family.

It localises to the cytoplasm. In Corynebacterium jeikeium (strain K411), this protein is Probable transcriptional regulatory protein jk1057.